A 579-amino-acid chain; its full sequence is Zinc finger protein 384 (579 aa).

The disordered stretch occupies residues 171 to 198 (TLTEEGGGGGGGGGTVAPPKPPRGRKKK). A compositionally biased stretch (gly residues) spans 175 to 185 (EGGGGGGGGGT). 8 C2H2-type zinc fingers span residues 229 to 251 (YRCR…SKSH), 257 to 279 (HKCP…IRIH), 285 to 307 (YSCN…TRIH), 318 to 340 (HKCP…LRIH), 346 to 368 (YNCS…TRIH), 374 to 398 (YKCA…RRQH), 404 to 426 (FKCH…LSTH), and 434 to 456 (YTCT…MRKH). Positions 500 to 513 (QAQASQASQQQQQQ) are enriched in low complexity. Residues 500–553 (QAQASQASQQQQQQQPPPPQPPHFQSPGAAPQGGGGGDSNQNPPPQCSFDLTPY) form a disordered region. Over residues 514–523 (QPPPPQPPHF) the composition is skewed to pro residues.

This sequence belongs to the krueppel C2H2-type zinc-finger protein family. In terms of assembly, interacts with BCAR1. Expressed in osteocytes, osteoblasts, and chondrocytes in bone.

The protein localises to the nucleus. Functionally, transcription factor that binds the consensus DNA sequence [GC]AAAAA. Seems to bind and regulate the promoters of MMP1, MMP3, MMP7 and COL1A1. The polypeptide is Zinc finger protein 384 (Znf384) (Rattus norvegicus (Rat)).